Here is a 266-residue protein sequence, read N- to C-terminus: Putative pyruvate, phosphate dikinase regulatory protein (266 aa).

ADP is bound at residue 147–154; that stretch reads GLSRTSKT.

The protein belongs to the pyruvate, phosphate/water dikinase regulatory protein family. PDRP subfamily.

It catalyses the reaction N(tele)-phospho-L-histidyl/L-threonyl-[pyruvate, phosphate dikinase] + ADP = N(tele)-phospho-L-histidyl/O-phospho-L-threonyl-[pyruvate, phosphate dikinase] + AMP + H(+). It carries out the reaction N(tele)-phospho-L-histidyl/O-phospho-L-threonyl-[pyruvate, phosphate dikinase] + phosphate + H(+) = N(tele)-phospho-L-histidyl/L-threonyl-[pyruvate, phosphate dikinase] + diphosphate. Its function is as follows. Bifunctional serine/threonine kinase and phosphorylase involved in the regulation of the pyruvate, phosphate dikinase (PPDK) by catalyzing its phosphorylation/dephosphorylation. The polypeptide is Putative pyruvate, phosphate dikinase regulatory protein (Clostridium perfringens (strain 13 / Type A)).